A 589-amino-acid polypeptide reads, in one-letter code: MSKTASSRNSLSAQLRRAANTRIEVEGNLALSIANDLLLAYGQSPFNSEAECISFSPRFDGTPDDFRINYLKAEIMSKYDDFSLGIDTEAVAWEKFLAAEAECALTNARLYRPDYSEDFNFSLGESCIHMARRKIAKLIGDVPSVEGMLRHCRFSGGATTTNNRSYGHPSFKFALPQACTPRALKYVLALRASTHFDIRISDISPFNKAVTVPKNSKTDRCIAIEPGWNMFFQLGIGGILRDRLRCWGIDLNDQTINQRRAHEGSVTNNLATVDLSAASDSISLALCELLLPPGWFEVLMDLRSPKGRLPDGSVVTYEKISSMGNGYTFELESLIFASLARSVCEILDLDSSEVTVYGDDIILPSCAVPALREVFKYVGFTTNTKKTFSEGPFRESCGKHYYSGVDVTPFYIRHRIVSPADLILVLNNLYRWATIDGVWDPRAHSVYLKYRKLLPKQLQRNTIPDGYGDGALVGSVLINPFAKNRGWIRYVPVITDHTRDRERAELGSYLYDLFSRCLSESNDGLPLRGPSGCDSADLFAIDQLICRSNPTKISRSTGKFDIQYIACSSRVLAPYGVFQGTKVASLHEA.

The 133-residue stretch at 259-391 (RRAHEGSVTN…TNTKKTFSEG (133 aa)) folds into the RdRp catalytic domain. Residues D274, D359, and D360 each coordinate Mg(2+).

As to quaternary structure, homodimer; the replicase complex can dimerize. Part of the viral RNA-dependent RNA polymerase complex, the other subunits are the host ribosomal protein S1, EF-Tu and EF-Ts. S1 is needed for the initiation of genomic RNA (+)-strand replication. Mg(2+) serves as cofactor.

It catalyses the reaction RNA(n) + a ribonucleoside 5'-triphosphate = RNA(n+1) + diphosphate. In terms of biological role, this is the catalytic subunit of the viral RNA-dependent RNA polymerase complex. This complex is involved in viral RNA replication that produces (+)-stranded genomes via a complementary, (-)-stranded intermediate. Binds RNA cooperatively with the host ribosomal protein S1. In Escherichia coli (Bacteriophage Q-beta), this protein is RNA-directed RNA polymerase subunit beta.